Consider the following 857-residue polypeptide: MAAAPSGKTWIDVQKKTFTGWANNYLKERILKIEDLATSLEDGVLLINLLEIISSKKILKYNKAPKIRMQKIENNNMAVNFIKSEGLKLVGIGAEDIVDSQLKLILGLIWTLILRYQIQMSESDNSPKAALLEWVRKQVAPYKVVVNNFTDSWCDGRVLSALTDSLKPGVREMSTLTGDAVQDIDRSMDIALEEYEIPKIMDANDMNSLPDELSVITYVSYFRDYALNKEKRDADALAALEKKRRETSDASKVEVYGPGVEGGFVNKSADFHIKAVNYYGEPLANGGEGFTVSVVGADGVEVPCKLVDNKNGIYDASYTATVPQDYTVVVQLDDVHCKDSPYNVKIDGSDAQHSNAYGPGLEGGKVGVPAAFKIQGRNKDGETVTQGGDDFTVKVQSPEGPVDAQIKDNGDGSYDVEYKPTKGGDHTVEVFLRGEPLAQGPTEVKILNSDSQNSYCDGPGFEKAQAKRPTEFTIHSVGADNKPCAAGGDPFQVSISGPHPVNVGITDNDDGTYTVAYTPEQPGDYEIQVTLNDEAIKDIPKSIHIKPAADPEKSYAEGPGLDGGECFQPSKFKIHAVDPDGVHRTDGGDGFVVTIEGPAPVDPVMVDNGDGTYDVEFEPKEAGDYVINLTLDGDNVNGFPKTVTVKPAPSAEHSYAEGEGLVKVFDNAPAEFTIFAVDTKGVARTDGGDPFEVAINGPDGLVVDAKVTDNNDGTYGVVYDAPVEGNYNVNVTLRGNPIKNMPIDVKCIEGANGEDSSFGSFTFTVAAKNKKGEVKTYGGDKFEVSITGPAEEITLDAIDNQDGTYTAAYSLVGNGRFSTGVKLNGKHIEGSPFKQVLGNPGKKNPEVKSFTTTRTAN.

M1 carries the blocked amino end (Met) modification. The segment at 1-250 (MAAAPSGKTW…EKKRRETSDA (250 aa)) is actin-binding. 2 consecutive Calponin-homology (CH) domains span residues 12-117 (DVQK…LRYQ) and 125-227 (NSPK…DYAL). The interval 229–246 (KEKRDADALAALEKKRRE) is regulatory site. Filamin repeat units follow at residues 245–346 (RETS…NVKI), 347–446 (DGSD…EVKI), 447–545 (LNSD…SIHI), 546–645 (KPAA…TVTV), 646–747 (KPAP…DVKC), and 763–837 (FTVA…KQVL). The interval 832–857 (PFKQVLGNPGKKNPEVKSFTTTRTAN) is disordered.

Homodimer.

In terms of biological role, F-actin cross-linking protein. This chain is Gelation factor (abpC), found in Dictyostelium discoideum (Social amoeba).